We begin with the raw amino-acid sequence, 528 residues long: Negative elongation factor A (528 aa).

The HDAg domain occupies 89-248 (WVLMVADILK…TPIPPSRTLL (160 aa)). The segment at 125–188 (REKVGECEAS…LQKSTETAQQ (64 aa)) is NELF-C/D-binding. Residue T157 is modified to Phosphothreonine. Residues 189 to 248 (LKRSAGVPFHAKGRGLLRKMDTTTPLKGIPKQAPFRSPTAPSVFSPTGNRTPIPPSRTLL) form an RNAPII-binding region. A disordered region spans residues 215 to 245 (KGIPKQAPFRSPTAPSVFSPTGNRTPIPPSR). Phosphoserine occurs at positions 225 and 233. Over residues 227 to 238 (TAPSVFSPTGNR) the composition is skewed to polar residues. Residue T277 is modified to Phosphothreonine. Over residues 320 to 341 (PSTSYLPSTPSVVPASSYIPSS) the composition is skewed to low complexity. A disordered region spans residues 320-409 (PSTSYLPSTP…PPAVAPTTQT (90 aa)). S363 carries the post-translational modification Phosphoserine.

This sequence belongs to the NELF-A family. The NELF complex is composed of NELFA, NELFB, NELFCD (isoform NELF-C or isoform NELF-D) and NELFE; NELFA and NELFCD form a stable subcomplex that binds to the N-terminus of NELFB. In vitro, the NELFA:NELFCD subcomplex binds to ssDNA and ssRNA in a sequence- and structure-dependent manner. Interacts with the RNA polymerase II complex when it is not phosphorylated by P-TEFb. As to expression, ubiquitous. Expressed in heart, brain, placenta, liver, skeletal muscle, kidney and pancreas. Expressed at lower level in adult lung. Expressed in fetal brain, lung, liver and kidney.

It is found in the nucleus. In terms of biological role, essential component of the NELF complex, a complex that negatively regulates the elongation of transcription by RNA polymerase II. The NELF complex, which acts via an association with the DSIF complex and causes transcriptional pausing, is counteracted by the P-TEFb kinase complex. Its function is as follows. (Microbial infection) The NELF complex is involved in HIV-1 latency possibly involving recruitment of PCF11 to paused RNA polymerase II. The chain is Negative elongation factor A (NELFA) from Homo sapiens (Human).